The following is a 429-amino-acid chain: Adenylosuccinate synthetase (429 aa).

GTP-binding positions include 12–18 (GDEGKGK) and 40–42 (GHT). The Proton acceptor role is filled by Asp13. Mg(2+)-binding residues include Asp13 and Gly40. IMP is bound by residues 13–16 (DEGK), 38–41 (NAGH), Thr129, Arg143, Gln223, Thr238, and Arg302. His41 functions as the Proton donor in the catalytic mechanism. 298 to 304 (TVTGRRR) contacts substrate. Residues Arg304, 330–332 (KLD), and 412–414 (STS) each bind GTP.

This sequence belongs to the adenylosuccinate synthetase family. In terms of assembly, homodimer. The cofactor is Mg(2+).

The protein localises to the cytoplasm. The enzyme catalyses IMP + L-aspartate + GTP = N(6)-(1,2-dicarboxyethyl)-AMP + GDP + phosphate + 2 H(+). It functions in the pathway purine metabolism; AMP biosynthesis via de novo pathway; AMP from IMP: step 1/2. In terms of biological role, plays an important role in the de novo pathway of purine nucleotide biosynthesis. Catalyzes the first committed step in the biosynthesis of AMP from IMP. The protein is Adenylosuccinate synthetase of Granulibacter bethesdensis (strain ATCC BAA-1260 / CGDNIH1).